We begin with the raw amino-acid sequence, 574 residues long: MATRAPLAPPPNETEASVSRITREGKKLTYKLNVMQQPERARACGAGAKSSADRRPVDPPPVVELRVYESDPNDDLNKTDITFAYNANFFLYATLETARPMAQGRFAPNPTCPVLTGVPVAGVAYLDRPSQAGYFIFPDLSVRHEGVYRLNFHLYEETKESKDANENAPIQSMSNPMPAKPMAPKSFLEFRLEVVSVPFTVFSAKKFPGLATSTSLSRVIAEQGCRVRIRRDVRMRRRGEKRTDDYDYDEERVYRSSDRFSTPDTHGYAGTPVERPRSTSTSTVDPSFPYGADAQRRSSGATEHGFQGAQPYQRPMPPAPVPAPVAVSTPAPPAPPAPPSHNPGYQSHLSFGSTQTQYPAPQLPPTPQSASTLAAPYSPHPSYSHARNPSTSAEYETPGYSYPSSRVSTERSSYPKNGLPPLRLEPPKPLNMPSGEPRSSDPNAYHSVAQSAGPRSQTPSSSLVPSLPPLKALSGDYPNNLSQPSSSISQSPSHDLGAGKKFLWDTGASLSKRSYEDSFGHDDRPLYNGMRPDTESHPRRLSDAGRNFYNETRDEMAYKRANGRMATKISPALQ.

Disordered stretches follow at residues 1–22, 39–60, 255–500, and 513–548; these read MATRAPLAPPPNETEASVSRIT, ERARACGAGAKSSADRRPVDPP, RSSD…GAGK, and RSYEDSFGHDDRPLYNGMRPDTESHPRRLSDAGRNF. The region spanning 25–230 is the Velvet domain; the sequence is GKKLTYKLNV…AEQGCRVRIR (206 aa). The Nuclear localization signal signature appears at 39-44; sequence ERARAC. Pro residues-rich tracts occupy residues 314–323 and 330–341; these read RPMPPAPVPA and PAPPAPPAPPSH. 4 stretches are compositionally biased toward polar residues: residues 343 to 359, 385 to 394, 402 to 415, and 448 to 458; these read PGYQSHLSFGSTQTQYP, HARNPSTSAE, YPSSRVSTERSSYP, and VAQSAGPRSQT. The segment at 457–501 is PEST; that stretch reads QTPSSSLVPSLPPLKALSGDYPNNLSQPSSSISQSPSHDLGAGKK. Composition is skewed to low complexity over residues 459–474 and 482–493; these read PSSSLVPSLPPLKALS and SQPSSSISQSPS. Basic and acidic residues-rich tracts occupy residues 513 to 525 and 532 to 543; these read RSYEDSFGHDDRP and PDTESHPRRLSD.

This sequence belongs to the velvet family. VeA subfamily. As to quaternary structure, component of the heterotrimeric velvet complex composed of laeA, veA and velB; VeA acting as a bridging protein between laeA and velB.

It is found in the nucleus. The protein resides in the cytoplasm. Functionally, component of the velvet transcription factor complex that controls sexual/asexual developmental ratio in response to light, promoting sexual development in the darkness while stimulating asexual sporulation under illumination. The velvet complex hat acts as a global regulator for secondary metabolite gene expression. Controls the expression of the aflatoxin gene cluster. Required for the expression of aflR and aflJ. Mediates the coordination of aflatoxigenic vesicles (aflatoxisomes) development with aflatoxin gene expression. Regulates branched chain amino acid and ethanol metabolism and acts as a positive regulator of mitochondrial and peroxisomal beta-oxidation. The sequence is that of Developmental and secondary metabolism regulator veA from Aspergillus parasiticus.